The sequence spans 124 residues: Glycine cleavage system H protein (124 aa).

One can recognise a Lipoyl-binding domain in the interval Thr24 to Lys106. The residue at position 65 (Lys65) is an N6-lipoyllysine.

Belongs to the GcvH family. As to quaternary structure, the glycine cleavage system is composed of four proteins: P, T, L and H. It depends on (R)-lipoate as a cofactor.

Functionally, the glycine cleavage system catalyzes the degradation of glycine. The H protein shuttles the methylamine group of glycine from the P protein to the T protein. The sequence is that of Glycine cleavage system H protein from Ruthia magnifica subsp. Calyptogena magnifica.